Reading from the N-terminus, the 293-residue chain is Bifunctional protein FolD (293 aa).

Residues 165–167 (GRS), serine 190, and isoleucine 231 contribute to the NADP(+) site.

Belongs to the tetrahydrofolate dehydrogenase/cyclohydrolase family. Homodimer.

The enzyme catalyses (6R)-5,10-methylene-5,6,7,8-tetrahydrofolate + NADP(+) = (6R)-5,10-methenyltetrahydrofolate + NADPH. It carries out the reaction (6R)-5,10-methenyltetrahydrofolate + H2O = (6R)-10-formyltetrahydrofolate + H(+). Its pathway is one-carbon metabolism; tetrahydrofolate interconversion. In terms of biological role, catalyzes the oxidation of 5,10-methylenetetrahydrofolate to 5,10-methenyltetrahydrofolate and then the hydrolysis of 5,10-methenyltetrahydrofolate to 10-formyltetrahydrofolate. The chain is Bifunctional protein FolD from Synechococcus sp. (strain WH7803).